The chain runs to 804 residues: Phenylalanine--tRNA ligase beta subunit (804 aa).

The region spanning 38 to 148 (RAAFRAFTIA…ENAPVGTSFA (111 aa)) is the tRNA-binding domain. A B5 domain is found at 401 to 476 (HTARVIDFPV…RIHGINRIDP (76 aa)). Mg(2+) is bound by residues Asp454, Asp460, Glu463, and Glu464. The FDX-ACB domain occupies 710–803 (SLFQSLKRDY…VAKQTGGVLR (94 aa)).

It belongs to the phenylalanyl-tRNA synthetase beta subunit family. Type 1 subfamily. In terms of assembly, tetramer of two alpha and two beta subunits. Mg(2+) is required as a cofactor.

Its subcellular location is the cytoplasm. It carries out the reaction tRNA(Phe) + L-phenylalanine + ATP = L-phenylalanyl-tRNA(Phe) + AMP + diphosphate + H(+). This Brucella melitensis biotype 1 (strain ATCC 23456 / CCUG 17765 / NCTC 10094 / 16M) protein is Phenylalanine--tRNA ligase beta subunit.